The sequence spans 65 residues: Large ribosomal subunit protein bL35 (65 aa).

Composition is skewed to basic residues over residues 1-16 (MPKM…RFKK) and 31-45 (HRFH…RQLR). The interval 1-47 (MPKMKTHRASAKRFKKTANGGLKSASAYTSHRFHGKTKKQRRQLRGT) is disordered.

It belongs to the bacterial ribosomal protein bL35 family.

In Leuconostoc citreum (strain KM20), this protein is Large ribosomal subunit protein bL35.